The following is a 148-amino-acid chain: Large ribosomal subunit protein uL15 (148 aa).

Residues 1-12 (MSEPIKLHDLRP) show a composition bias toward basic and acidic residues. The disordered stretch occupies residues 1–52 (MSEPIKLHDLRPAKGANKPKTRVGRGEASKGKTAGRGTKGTKARKQVSAAFE).

It belongs to the universal ribosomal protein uL15 family. As to quaternary structure, part of the 50S ribosomal subunit.

Binds to the 23S rRNA. This is Large ribosomal subunit protein uL15 from Corynebacterium diphtheriae (strain ATCC 700971 / NCTC 13129 / Biotype gravis).